The sequence spans 1199 residues: Ecdysone-induced protein 75B, isoforms C/D (1199 aa).

The segment at 130-182 (TTDGPTAVLQQQQPQQQMPQHFESLPHHHPQQEHQPQQQQQQHHLQHHPHPHV) is disordered. 2 stretches are compositionally biased toward low complexity: residues 139 to 149 (QQQQPQQQMPQ) and 162 to 172 (EHQPQQQQQQH). Residues 242 to 318 (TVLCRVCGDK…VGMSRDAVRF (77 aa)) constitute a DNA-binding region (nuclear receptor). 2 NR C4-type zinc fingers span residues 245 to 265 (CRVC…CEGC) and 282 to 306 (CTKN…LKKC). The 249-residue stretch at 352-600 (DQPRLLAAVL…QQMWSMEDGN (249 aa)) folds into the NR LBD domain. Disordered stretches follow at residues 624–665 (KSPL…SALA), 771–808 (LDSP…SVDD), 831–851 (VSVS…KRQI), 895–961 (AEAD…SSHS), 991–1104 (ENST…SNSA), and 1155–1188 (VTVT…NPGL). Composition is skewed to low complexity over residues 641–653 (GSPS…GVSL), 792–804 (SSGG…SPRS), 831–845 (VSVS…STSS), 897–942 (ADAS…AQSQ), and 950–961 (SSPKASMASSHS). 2 stretches are compositionally biased toward polar residues: residues 993 to 1006 (STAA…VGNR) and 1018 to 1040 (AVQN…QRQQ). Composition is skewed to low complexity over residues 1041–1077 (SVSP…SASS), 1086–1104 (STSN…SNSA), and 1159–1187 (ASNG…PNPG).

This sequence belongs to the nuclear hormone receptor family. NR1 subfamily.

It localises to the nucleus. Functionally, implicated in the regulation of ecdysone-triggered gene hierarchies. Probably plays a key role in mediating the regulation of the larval molt by 20-OH-ecdysone. This chain is Ecdysone-induced protein 75B, isoforms C/D (Eip75B), found in Drosophila melanogaster (Fruit fly).